The primary structure comprises 422 residues: MSMNLKETIILKLDEVRTASRTLVTLTDSTINEVLLDLAGRIAPNAAAILEANRSDLERMERSSPMYDRLLLNEKRLEGIAADIRNVASLPSPLDMTLEERTLENGLRLRKASVPMGVIGIIYEARPNVTFDVFALSLKSGNATVLKGGSDADASNRAIVELIHSVLSDHNLSPDTLYLLPSEREAATVMMGAVGKIDMIIPRGSQALINHVRNTAKVPVIETGAGIVHTYFDKSGELEMGKEIVLNAKTRRPSVCNALDTLIIHSERLGDLSELCRPLAEHQVIIFADERAYLSLLASYPEQLLQHAEPEHFGTEFLSLKLSVKTVDTLDDALEHIAAYSSQHSEAVITEDPAVKAEFFKRVDAAVVYANTSTAFTDGAQFGLGAEIGISTQKLHARGPMALRELTTYKWMIEGDGQTRPA.

Belongs to the gamma-glutamyl phosphate reductase family.

It localises to the cytoplasm. It catalyses the reaction L-glutamate 5-semialdehyde + phosphate + NADP(+) = L-glutamyl 5-phosphate + NADPH + H(+). Its pathway is amino-acid biosynthesis; L-proline biosynthesis; L-glutamate 5-semialdehyde from L-glutamate: step 2/2. Functionally, catalyzes the NADPH-dependent reduction of L-glutamate 5-phosphate into L-glutamate 5-semialdehyde and phosphate. The product spontaneously undergoes cyclization to form 1-pyrroline-5-carboxylate. This Chlorobium phaeovibrioides (strain DSM 265 / 1930) (Prosthecochloris vibrioformis (strain DSM 265)) protein is Gamma-glutamyl phosphate reductase.